Reading from the N-terminus, the 586-residue chain is Kelch-like protein 7 (586 aa).

One can recognise a BTB domain in the interval 44-111 (CDVILMVQER…AYTARISVNS (68 aa)). The 103-residue stretch at 146–248 (CLGISVLAEC…SKNFLSKTVQ (103 aa)) folds into the BACK domain. Kelch repeat units lie at residues 294–336 (RIAL…FWDN), 337–382 (VVYI…AAEG), 383–430 (KIYT…EANG), 431–481 (LIYV…FVKD), 483–528 (IFAV…AVGS), and 530–575 (IYVL…CVVD).

In terms of assembly, homodimer. Component of the BCR(KLHL7) E3 ubiquitin ligase complex, at least composed of CUL3 and KLHL7 and RBX1.

It localises to the nucleus. The protein resides in the cytoplasm. Its pathway is protein modification; protein ubiquitination. Its function is as follows. Substrate-specific adapter of a BCR (BTB-CUL3-RBX1) E3 ubiquitin ligase complex. The BCR(KLHL7) complex acts by mediating ubiquitination and subsequent degradation of substrate proteins. Probably mediates 'Lys-48'-linked ubiquitination. The sequence is that of Kelch-like protein 7 (Klhl7) from Rattus norvegicus (Rat).